A 513-amino-acid chain; its full sequence is ATP synthase subunit beta (513 aa).

Residues 1–29 (MATAPATEKKAPAKKAAAPKAAAPKKAAA) form a disordered region. The segment covering 14 to 29 (KKAAAPKAAAPKKAAA) has biased composition (low complexity). 186-193 (GGAGVGKT) provides a ligand contact to ATP.

It belongs to the ATPase alpha/beta chains family. In terms of assembly, F-type ATPases have 2 components, CF(1) - the catalytic core - and CF(0) - the membrane proton channel. CF(1) has five subunits: alpha(3), beta(3), gamma(1), delta(1), epsilon(1). CF(0) has three main subunits: a(1), b(2) and c(9-12). The alpha and beta chains form an alternating ring which encloses part of the gamma chain. CF(1) is attached to CF(0) by a central stalk formed by the gamma and epsilon chains, while a peripheral stalk is formed by the delta and b chains.

The protein localises to the cell inner membrane. The catalysed reaction is ATP + H2O + 4 H(+)(in) = ADP + phosphate + 5 H(+)(out). Produces ATP from ADP in the presence of a proton gradient across the membrane. The catalytic sites are hosted primarily by the beta subunits. This is ATP synthase subunit beta from Sphingopyxis alaskensis (strain DSM 13593 / LMG 18877 / RB2256) (Sphingomonas alaskensis).